A 348-amino-acid polypeptide reads, in one-letter code: Anthranilate phosphoribosyltransferase (348 aa).

5-phospho-alpha-D-ribose 1-diphosphate contacts are provided by residues Gly81, 84–85 (GD), 91–94 (NVST), 109–117 (KHGNRAVSG), and Ser121. Gly81 contributes to the anthranilate binding site. Ser93 is a binding site for Mg(2+). Asn112 contributes to the anthranilate binding site. Arg167 contributes to the anthranilate binding site. Residues Asp226 and Glu227 each contribute to the Mg(2+) site.

This sequence belongs to the anthranilate phosphoribosyltransferase family. In terms of assembly, homodimer. It depends on Mg(2+) as a cofactor.

The catalysed reaction is N-(5-phospho-beta-D-ribosyl)anthranilate + diphosphate = 5-phospho-alpha-D-ribose 1-diphosphate + anthranilate. It participates in amino-acid biosynthesis; L-tryptophan biosynthesis; L-tryptophan from chorismate: step 2/5. In terms of biological role, catalyzes the transfer of the phosphoribosyl group of 5-phosphorylribose-1-pyrophosphate (PRPP) to anthranilate to yield N-(5'-phosphoribosyl)-anthranilate (PRA). The polypeptide is Anthranilate phosphoribosyltransferase (Stutzerimonas stutzeri (strain A1501) (Pseudomonas stutzeri)).